Here is a 431-residue protein sequence, read N- to C-terminus: 3-phosphoshikimate 1-carboxyvinyltransferase (431 aa).

Residues lysine 26, serine 27, and arginine 31 each coordinate 3-phosphoshikimate. Lysine 26 is a phosphoenolpyruvate binding site. Residues glycine 100 and arginine 129 each coordinate phosphoenolpyruvate. 3-phosphoshikimate contacts are provided by serine 175, serine 176, glutamine 177, aspartate 308, and glutamine 335. Glutamine 177 serves as a coordination point for phosphoenolpyruvate. The active-site Proton acceptor is the aspartate 308. Residues arginine 339, arginine 381, and lysine 412 each coordinate phosphoenolpyruvate.

Belongs to the EPSP synthase family. As to quaternary structure, monomer.

It is found in the cytoplasm. The catalysed reaction is 3-phosphoshikimate + phosphoenolpyruvate = 5-O-(1-carboxyvinyl)-3-phosphoshikimate + phosphate. The protein operates within metabolic intermediate biosynthesis; chorismate biosynthesis; chorismate from D-erythrose 4-phosphate and phosphoenolpyruvate: step 6/7. In terms of biological role, catalyzes the transfer of the enolpyruvyl moiety of phosphoenolpyruvate (PEP) to the 5-hydroxyl of shikimate-3-phosphate (S3P) to produce enolpyruvyl shikimate-3-phosphate and inorganic phosphate. The polypeptide is 3-phosphoshikimate 1-carboxyvinyltransferase (Opitutus terrae (strain DSM 11246 / JCM 15787 / PB90-1)).